Consider the following 253-residue polypeptide: Sulfoacetaldehyde reductase (253 aa).

An NADP(+)-binding site is contributed by 6-30; the sequence is FITGATSGFGRAAAHRFAAAGWSLV. Residue S139 participates in substrate binding. The active-site Proton acceptor is the Y152.

This sequence belongs to the short-chain dehydrogenases/reductases (SDR) family. As to quaternary structure, homodimer and heterotetramer.

It catalyses the reaction 2-hydroxyethane-1-sulfonate + NADP(+) = sulfoacetaldehyde + NADPH + H(+). The protein operates within organosulfur degradation. In terms of biological role, catalyzes the formation of isethionate from 2-sulfoacetaldehyde in the deaminative pathway of taurine. The enzyme is specific for NADPH; NADH is not a substrate. Responsible for most of the activity observed in taurine-grown cells. This chain is Sulfoacetaldehyde reductase (isfD), found in Chromohalobacter salexigens (strain ATCC BAA-138 / DSM 3043 / CIP 106854 / NCIMB 13768 / 1H11).